Reading from the N-terminus, the 95-residue chain is UPF0235 protein A2cp1_1215 (95 aa).

Belongs to the UPF0235 family.

This is UPF0235 protein A2cp1_1215 from Anaeromyxobacter dehalogenans (strain 2CP-1 / ATCC BAA-258).